The sequence spans 205 residues: Isochorismatase domain-containing protein 2 (205 aa).

2 positions are modified to phosphoserine: Ser-7 and Ser-202.

This sequence belongs to the isochorismatase family. Interacts with CDKN2A.

Its subcellular location is the cytoplasm. The protein resides in the nucleus. This is Isochorismatase domain-containing protein 2 (ISOC2) from Pongo abelii (Sumatran orangutan).